The primary structure comprises 143 residues: Cofilin/actin-depolymerizing factor homolog 2 (143 aa).

An ADF-H domain is found at 4-141; sequence GVKVSDECVY…FEDELRTIIL (138 aa).

It belongs to the actin-binding proteins ADF family. Interacts with monomeric actin, does not bind to actin polymers.

The protein resides in the cytoplasm. The protein localises to the cytoskeleton. Its function is as follows. Not involved in actin polymerisation, instead functions to stimulate nucleotide exchange on monomeric actin and influence turnover of the small amount of cytosolic actin microfilaments. Essential for erythrocytic schizogony. This Plasmodium falciparum (isolate 3D7) protein is Cofilin/actin-depolymerizing factor homolog 2.